The primary structure comprises 302 residues: MDQNNSLPPYAQGLASPQGAMTPGIPIFSPMMPYGTGLTPQPVQSTNSLSILEEQQRQQQQQQAAQSSTSQQATQGTSGQTPQLFHSQTLTTAPLPGTTPLYPSPMTPMTPITPATPASESSGIVPQLQNIVSTVNLGCKLDLKTIALRARNAEYNPKRFAAVIMRIREPRTTALIFSSGKMVCTGAKSEEQSRLAARKYARVVQKLGFPAKFLDFKIQNMVGSCDVKFPIRLEGLVLTHQQFSSYEPELFPGLIYRMIKPRIVLLIFVSGKVVLTGAKVRAEIYEAFENIYPILKGFRKTT.

Disordered regions lie at residues 1-20 (MDQN…PQGA) and 53-121 (EEQQ…ASES). Composition is skewed to low complexity over residues 57–81 (RQQQ…SGQT), 89–101 (TLTT…TTPL), and 109–119 (MTPITPATPAS). 2 consecutive repeat copies span residues 128 to 204 (LQNI…ARVV) and 218 to 295 (IQNM…YPIL).

The protein belongs to the TBP family. Belongs to the TFIID complex together with the TBP-associated factors (TAFs). Binds DNA as monomer.

Its subcellular location is the nucleus. In terms of biological role, general transcription factor that functions at the core of the DNA-binding multiprotein factor TFIID. Binding of TFIID to the TATA box is the initial transcriptional step of the pre-initiation complex (PIC), playing a role in the activation of eukaryotic genes transcribed by RNA polymerase II. The polypeptide is TATA-box-binding protein (TBP) (Gallus gallus (Chicken)).